Consider the following 419-residue polypeptide: Pregnancy-specific beta-1-glycoprotein 4 (419 aa).

Positions 1-34 (MGPLSAPPCTQRITWKGVLLTASLLNFWNPPTTA) are cleaved as a signal peptide. Residues 35-144 (QVTIEAQPPK…TGHFTFTLHL (110 aa)) form the Ig-like V-type domain. N104, N111, N199, N268, N299, and N303 each carry an N-linked (GlcNAc...) asparagine glycan. 3 Ig-like C2-type domains span residues 147 to 234 (PKPS…VTLN), 237 to 327 (PKLS…VTLN), and 332 to 410 (PDLP…KSIT). 3 disulfide bridges follow: C169–C217, C262–C310, and C354–C394.

This sequence belongs to the immunoglobulin superfamily. CEA family.

It localises to the secreted. The chain is Pregnancy-specific beta-1-glycoprotein 4 (PSG4) from Homo sapiens (Human).